The sequence spans 541 residues: Chaperonin GroEL (541 aa).

ATP contacts are provided by residues 29 to 32 (TLGP), 86 to 90 (DGTTT), G413, 476 to 478 (NAA), and D492.

Belongs to the chaperonin (HSP60) family. Forms a cylinder of 14 subunits composed of two heptameric rings stacked back-to-back. Interacts with the co-chaperonin GroES.

It localises to the cytoplasm. The enzyme catalyses ATP + H2O + a folded polypeptide = ADP + phosphate + an unfolded polypeptide.. In terms of biological role, together with its co-chaperonin GroES, plays an essential role in assisting protein folding. The GroEL-GroES system forms a nano-cage that allows encapsulation of the non-native substrate proteins and provides a physical environment optimized to promote and accelerate protein folding. The protein is Chaperonin GroEL of Streptococcus equi subsp. equi (strain 4047).